The following is a 206-amino-acid chain: Ribosomal RNA large subunit methyltransferase E (206 aa).

Residues glycine 54, tryptophan 56, aspartate 76, aspartate 94, and aspartate 118 each coordinate S-adenosyl-L-methionine. Lysine 158 serves as the catalytic Proton acceptor.

The protein belongs to the class I-like SAM-binding methyltransferase superfamily. RNA methyltransferase RlmE family.

The protein localises to the cytoplasm. The enzyme catalyses uridine(2552) in 23S rRNA + S-adenosyl-L-methionine = 2'-O-methyluridine(2552) in 23S rRNA + S-adenosyl-L-homocysteine + H(+). Functionally, specifically methylates the uridine in position 2552 of 23S rRNA at the 2'-O position of the ribose in the fully assembled 50S ribosomal subunit. The chain is Ribosomal RNA large subunit methyltransferase E from Methanosphaera stadtmanae (strain ATCC 43021 / DSM 3091 / JCM 11832 / MCB-3).